The chain runs to 201 residues: Recombination protein RecR (201 aa).

Residues 57-72 (CKLCQIYTEQPLCNIC) form a C4-type zinc finger. One can recognise a Toprim domain in the interval 80-175 (TLLCVVESPA…KCSRIAHGVP (96 aa)).

The protein belongs to the RecR family.

Functionally, may play a role in DNA repair. It seems to be involved in an RecBC-independent recombinational process of DNA repair. It may act with RecF and RecO. This is Recombination protein RecR from Coxiella burnetii (strain RSA 493 / Nine Mile phase I).